The sequence spans 602 residues: UvrABC system protein C (602 aa).

Positions Thr17–Ile94 constitute a GIY-YIG domain. Positions Ser199–Ile234 constitute a UVR domain.

It belongs to the UvrC family. As to quaternary structure, interacts with UvrB in an incision complex.

The protein localises to the cytoplasm. In terms of biological role, the UvrABC repair system catalyzes the recognition and processing of DNA lesions. UvrC both incises the 5' and 3' sides of the lesion. The N-terminal half is responsible for the 3' incision and the C-terminal half is responsible for the 5' incision. The polypeptide is UvrABC system protein C (Borrelia hermsii (strain HS1 / DAH)).